Reading from the N-terminus, the 95-residue chain is Alpha-bungarotoxin isoform V31 (95 aa).

The first 21 residues, 1–21 (MKTLLLTLVVVTIVCLDLGYT), serve as a signal peptide directing secretion. Cystine bridges form between C24/C44, C37/C65, C50/C54, C69/C80, and C81/C86.

The protein belongs to the three-finger toxin family. Long-chain subfamily. Type II alpha-neurotoxin sub-subfamily. Monomer in solution, homodimer in crystal state. In terms of tissue distribution, expressed by the venom gland.

The protein resides in the secreted. In terms of biological role, binds with high affinity to muscular (alpha-1/CHRNA1) and neuronal (alpha-7/CHRNA7) nicotinic acetylcholine receptor (nAChR) and inhibits acetylcholine from binding to the receptor, thereby impairing neuromuscular and neuronal transmission. This is Alpha-bungarotoxin isoform V31 from Bungarus multicinctus (Many-banded krait).